The chain runs to 359 residues: MDPAERAQAARARVPRIDPYGFERPEDFDYAAYEEFFSTYLVILTKRAIKWSKLLKGNGGVRKSVTVKRYVRKGIPLEHRARVWMAVSGAQARMDQSPGYYHRLLEGESSSSLDEAIRTDLNRTFPDNVMFRKTADPCLQKTLYNVLLAYGLHNPDVGYCQCCAQKPGSSAGLRSSLTGMNFIAGYLILITKNEEESFWLLDALVGRILPDYYSPAMLGLKTDQEVLAELVRMKLPAVAALMDGHGVLWTLLVSRWFICLFVDILPVETVLRIWDCLFNEGSKIIFRVALTLIKQHQEFILEASSIPDICDKFKQITKGDFVTECHAFMQKIFSEPGSLSMTTITRLRKSCRAALQAQS.

Positions 74 to 281 (GIPLEHRARV…RIWDCLFNEG (208 aa)) constitute a Rab-GAP TBC domain.

As to expression, highly expressed in testes, expression greatly increased at postnatal day 20 and remained high up to day 90. Moderately expressed in kidney and liver, weakly expressed in intestine, lung, ovaries and stomach. Expression of Growth hormone increased the expression in testis but decreased expression in liver and kidney.

In terms of biological role, may act as a GTPase-activating protein for Rab family protein(s). In Mus musculus (Mouse), this protein is Growth hormone-regulated TBC protein 1 (Grtp1).